The following is a 107-amino-acid chain: Putative pterin-4-alpha-carbinolamine dehydratase (107 aa).

The protein belongs to the pterin-4-alpha-carbinolamine dehydratase family.

It carries out the reaction (4aS,6R)-4a-hydroxy-L-erythro-5,6,7,8-tetrahydrobiopterin = (6R)-L-erythro-6,7-dihydrobiopterin + H2O. This Rubrobacter xylanophilus (strain DSM 9941 / JCM 11954 / NBRC 16129 / PRD-1) protein is Putative pterin-4-alpha-carbinolamine dehydratase.